The sequence spans 319 residues: ADP-L-glycero-D-manno-heptose-6-epimerase (319 aa).

NADP(+) contacts are provided by residues 10–11 (FI), 31–32 (DD), Lys38, Lys53, and 75–79 (EGACS). Tyr139 acts as the Proton acceptor in catalysis. Lys143 provides a ligand contact to NADP(+). Residue Asn168 coordinates substrate. Residues Val169 and Lys177 each coordinate NADP(+). Catalysis depends on Lys177, which acts as the Proton acceptor. Substrate-binding positions include Ser179, His186, 200–203 (FEGA), Arg213, and Tyr281.

Belongs to the NAD(P)-dependent epimerase/dehydratase family. HldD subfamily. In terms of assembly, homopentamer. NADP(+) serves as cofactor.

It carries out the reaction ADP-D-glycero-beta-D-manno-heptose = ADP-L-glycero-beta-D-manno-heptose. Its pathway is nucleotide-sugar biosynthesis; ADP-L-glycero-beta-D-manno-heptose biosynthesis; ADP-L-glycero-beta-D-manno-heptose from D-glycero-beta-D-manno-heptose 7-phosphate: step 4/4. Its function is as follows. Catalyzes the interconversion between ADP-D-glycero-beta-D-manno-heptose and ADP-L-glycero-beta-D-manno-heptose via an epimerization at carbon 6 of the heptose. The polypeptide is ADP-L-glycero-D-manno-heptose-6-epimerase (Aromatoleum aromaticum (strain DSM 19018 / LMG 30748 / EbN1) (Azoarcus sp. (strain EbN1))).